The sequence spans 550 residues: Chaperonin GroEL (550 aa).

Residues 30–33, Lys-51, 87–91, Gly-415, 479–481, and Asp-495 each bind ATP; these read TLGP, DGTTT, and NAA.

The protein belongs to the chaperonin (HSP60) family. In terms of assembly, forms a cylinder of 14 subunits composed of two heptameric rings stacked back-to-back. Interacts with the co-chaperonin GroES.

Its subcellular location is the cytoplasm. It catalyses the reaction ATP + H2O + a folded polypeptide = ADP + phosphate + an unfolded polypeptide.. Its function is as follows. Together with its co-chaperonin GroES, plays an essential role in assisting protein folding. The GroEL-GroES system forms a nano-cage that allows encapsulation of the non-native substrate proteins and provides a physical environment optimized to promote and accelerate protein folding. In Polynucleobacter asymbioticus (strain DSM 18221 / CIP 109841 / QLW-P1DMWA-1) (Polynucleobacter necessarius subsp. asymbioticus), this protein is Chaperonin GroEL.